The following is a 514-amino-acid chain: Folylpolyglutamate synthase (514 aa).

82 to 85 (GKGS) contacts ATP. Residues S107, E186, and H214 each coordinate Mg(2+). ATP is bound by residues R339 and D355.

It belongs to the folylpolyglutamate synthase family. A monovalent cation serves as cofactor.

The protein localises to the mitochondrion inner membrane. Its subcellular location is the mitochondrion matrix. The protein resides in the cytoplasm. It carries out the reaction (6S)-5,6,7,8-tetrahydrofolyl-(gamma-L-Glu)(n) + L-glutamate + ATP = (6S)-5,6,7,8-tetrahydrofolyl-(gamma-L-Glu)(n+1) + ADP + phosphate + H(+). The protein operates within cofactor biosynthesis; tetrahydrofolylpolyglutamate biosynthesis. In terms of biological role, catalyzes conversion of folates to polyglutamate derivatives allowing concentration of folate compounds in the cell and the intracellular retention of these cofactors, which are important substrates for most of the folate-dependent enzymes that are involved in one-carbon transfer reactions involved in purine, pyrimidine and amino acid synthesis. The polypeptide is Folylpolyglutamate synthase (MET7) (Candida albicans (Yeast)).